The chain runs to 387 residues: Zinc finger protein neuro-d4 (387 aa).

Glycyl lysine isopeptide (Lys-Gly) (interchain with G-Cter in SUMO2) cross-links involve residues K106, K129, and K133. The C2H2-type zinc finger occupies 195–218 (YVCDICGKRYKNRPGLSYHYTHTH). 2 PHD-type zinc fingers span residues 271–328 (NGYC…CKSC) and 325–375 (CKSC…CLRH). Zn(2+) contacts are provided by C274, C277, C293, C296, H301, C304, C322, C325, C328, C331, C343, C346, H351, C354, C369, and C372.

The protein belongs to the requiem/DPF family. In terms of assembly, component of neuron-specific chromatin remodeling complex (nBAF complex) composed of at least, ARID1A/BAF250A or ARID1B/BAF250B, SMARCD1/BAF60A, SMARCD3/BAF60C, SMARCA2/BRM/BAF190B, SMARCA4/BRG1/BAF190A, SMARCB1/BAF47, SMARCC1/BAF155, SMARCE1/BAF57, SMARCC2/BAF170, DPF1/BAF45B, DPF3/BAF45C, ACTL6B/BAF53B and actin.

It is found in the cytoplasm. It localises to the nucleus. In terms of biological role, may have an important role in developing neurons by participating in regulation of cell survival, possibly as a neurospecific transcription factor. Belongs to the neuron-specific chromatin remodeling complex (nBAF complex). During neural development a switch from a stem/progenitor to a postmitotic chromatin remodeling mechanism occurs as neurons exit the cell cycle and become committed to their adult state. The transition from proliferating neural stem/progenitor cells to postmitotic neurons requires a switch in subunit composition of the npBAF and nBAF complexes. As neural progenitors exit mitosis and differentiate into neurons, npBAF complexes which contain ACTL6A/BAF53A and PHF10/BAF45A, are exchanged for homologous alternative ACTL6B/BAF53B and DPF1/BAF45B or DPF3/BAF45C subunits in neuron-specific complexes (nBAF). The npBAF complex is essential for the self-renewal/proliferative capacity of the multipotent neural stem cells. The nBAF complex along with CREST plays a role regulating the activity of genes essential for dendrite growth. The protein is Zinc finger protein neuro-d4 of Homo sapiens (Human).